Here is a 2300-residue protein sequence, read N- to C-terminus: Adenylate cyclase (2300 aa).

Polar residues-rich tracts occupy residues 1 to 21 (MTRNDGGSRYSSIDSAQSSIT) and 28 to 41 (TPTSSLGSSMTRPL). Disordered regions lie at residues 1-256 (MTRN…GSFL), 272-593 (GIRP…DLTR), and 631-652 (TKLFTSKKSSSAKQPQDDMDED). 2 stretches are compositionally biased toward low complexity: residues 42–61 (SPSLQAGSSSSNGGHNVSRS) and 92–152 (SSQS…QVSP). The segment covering 153-169 (TGGSRLTQSPTTPSNAS) has biased composition (polar residues). Positions 170–185 (IREHRMSELGGYRREM) are enriched in basic and acidic residues. Residues 204 to 221 (QQQPQQPQQQQQQQQQQQ) show a composition bias toward low complexity. Polar residues predominate over residues 228-237 (VSGTFSNLSQ). Residues 303–313 (SIASITTTASS) show a composition bias toward low complexity. The span at 333–344 (GDRDDWPGRDSS) shows a compositional bias: basic and acidic residues. Residues 345–357 (EISLPQPSHSGPM) are compositionally biased toward polar residues. Positions 410-421 (PSRPRTPVPAPE) are enriched in pro residues. Positions 455–469 (DSSQNPPKTSSSARS) are enriched in polar residues. Over residues 484-501 (KSNEDPRALKPSLSREDS) the composition is skewed to basic and acidic residues. Positions 511–550 (NGSSSMMGTRSRAQSPAPSWTGTSRGLKANSISDGTSSPA) are enriched in polar residues. Basic residues predominate over residues 552-565 (SHKKGILGRFRRHN). Residues 631–643 (TKLFTSKKSSSAK) show a composition bias toward low complexity. A Ras-associating domain is found at 749-841 (SNYYIRVFRS…IDEIGREDNS (93 aa)). 16 LRR repeats span residues 867–890 (NQKLNHVDLSGRNLITIPVPLYRK), 892–914 (AEIVSLNLSRNLSLDVPRDFIQA), 915–938 (CTALRDIKYNNNEAQALPKSFATA), 939–961 (SKLTYLDVSNNRLQDLDHSELSK), 962–986 (LTGLLKLNLANNCLRSLPPTLGAYK), 988–1008 (LRTLNISSNFLDVFPSFICEL), 1009–1031 (ETIVDLDLSFNSINNLPDNLMKL), 1033–1055 (NLEKFVITNNRLSGPISESVRDL), 1056–1079 (VSLRELDIRYNQISTIDVLSDLPR), 1081–1097 (EILSADHNQISKFSGSF), 1098–1119 (ERLRSLKLNSNPIVKFEVKAPV), 1120–1142 (PTLKILNLSNAQLASIDESIDNL), 1143–1165 (MNLERLILDSNYFVSLPNQIGNL), 1166–1188 (KKLDHLSMANNHLGELPPEIGCL), 1189–1211 (TELRTLDVHGNNMRKLPNEIWWA), and 1213–1234 (KLEHLNASSNILTEFPKPASRA). The segment at 1228–1336 (PKPASRAPQA…VITPSNGPRK (109 aa)) is disordered. Residues 1253–1263 (ANKNGLLSRTP) show a composition bias toward polar residues. Low complexity predominate over residues 1313–1327 (TSVVSRSTTQSSTGV). LRR repeat units follow at residues 1349–1369 (SGSLKNLYLADNQLDDDVFEE), 1373–1396 (LPELRVLNLSCNDLSDMPQGTIRS), 1398–1420 (PQLVELYLSGNELTSLPAEDFLE), 1422–1445 (HCLLQTLHINGNKFINLPAEISRA), 1447–1469 (KLQVLDCSSNNLKYNVTNVPYDW), and 1474–1497 (NRDLRYLNLSGNKRLEIKNNYRQP). Residues 1552–1828 (PYGMADTLGK…NKLLIMMIGV (277 aa)) enclose the PPM-type phosphatase domain. The tract at residues 1847–1867 (FSMPQDDPSHVPPSGNKRRKV) is disordered. A Guanylate cyclase domain is found at 1892-2029 (SIVFTDIKNS…PMVNKASRIS (138 aa)). Residues Asp1897 and Asp1940 each coordinate Mg(2+). The interval 2272 to 2300 (LDQAETDDATDNNSSGDVDTLDGSDTEQE) is disordered. Over residues 2290-2300 (DTLDGSDTEQE) the composition is skewed to acidic residues.

Belongs to the adenylyl cyclase class-4/guanylyl cyclase family. Requires Mg(2+) as cofactor.

The catalysed reaction is ATP = 3',5'-cyclic AMP + diphosphate. Functionally, plays essential roles in regulation of cellular metabolism by catalyzing the synthesis of a second messenger, cAMP. This is Adenylate cyclase (cr-1) from Neurospora crassa (strain ATCC 24698 / 74-OR23-1A / CBS 708.71 / DSM 1257 / FGSC 987).